The sequence spans 448 residues: Tubulin beta chain (448 aa).

Residues Q11, E69, S138, G142, T143, G144, N204, and N226 each contribute to the GTP site. E69 lines the Mg(2+) pocket. A disordered region spans residues 425–448; sequence YQDAGVDEEEEEYDEEAPVEEPLE. Residues 429–448 are compositionally biased toward acidic residues; the sequence is GVDEEEEEYDEEAPVEEPLE.

Belongs to the tubulin family. Dimer of alpha and beta chains. A typical microtubule is a hollow water-filled tube with an outer diameter of 25 nm and an inner diameter of 15 nM. Alpha-beta heterodimers associate head-to-tail to form protofilaments running lengthwise along the microtubule wall with the beta-tubulin subunit facing the microtubule plus end conferring a structural polarity. Microtubules usually have 13 protofilaments but different protofilament numbers can be found in some organisms and specialized cells. Mg(2+) is required as a cofactor.

It localises to the cytoplasm. The protein resides in the cytoskeleton. Its function is as follows. Tubulin is the major constituent of microtubules, a cylinder consisting of laterally associated linear protofilaments composed of alpha- and beta-tubulin heterodimers. Microtubules grow by the addition of GTP-tubulin dimers to the microtubule end, where a stabilizing cap forms. Below the cap, tubulin dimers are in GDP-bound state, owing to GTPase activity of alpha-tubulin. This Metarhizium anisopliae (Entomophthora anisopliae) protein is Tubulin beta chain.